The following is a 245-amino-acid chain: Aliphatic sulfonates import ATP-binding protein SsuB 2 (245 aa).

Residues 15 to 229 enclose the ABC transporter domain; the sequence is VAVRGLSRAF…DVADPEFARI (215 aa). Residue 47 to 54 participates in ATP binding; that stretch reads GASGCGKS.

The protein belongs to the ABC transporter superfamily. Aliphatic sulfonates importer (TC 3.A.1.17.2) family. As to quaternary structure, the complex is composed of two ATP-binding proteins (SsuB), two transmembrane proteins (SsuC) and a solute-binding protein (SsuA).

Its subcellular location is the cell inner membrane. The enzyme catalyses ATP + H2O + aliphatic sulfonate-[sulfonate-binding protein]Side 1 = ADP + phosphate + aliphatic sulfonateSide 2 + [sulfonate-binding protein]Side 1.. Its function is as follows. Part of the ABC transporter complex SsuABC involved in aliphatic sulfonates import. Responsible for energy coupling to the transport system. This is Aliphatic sulfonates import ATP-binding protein SsuB 2 from Paracoccus denitrificans (strain Pd 1222).